We begin with the raw amino-acid sequence, 439 residues long: Vitellogenin-1 (439 aa).

Residues 1–20 (MNPMRVLSLLACLAVAALAK) form the signal peptide. Residues 158–175 (QQQRQHGKNGNQDYQDQS) show a composition bias toward polar residues. 2 disordered regions span residues 158-196 (QQQRQHGKNGNQDYQDQSNEQRKNQRTSSEEDYSEEVKN) and 407-439 (KSPFGRNAPAQKQSSYHGVHQAWNTNQDSKDYQ). Residue Y171 is modified to Phosphotyrosine. 3 positions are modified to phosphoserine: S175, S185, and S186. Position 190 is a phosphotyrosine (Y190). The residue at position 191 (S191) is a Phosphoserine. A compositionally biased stretch (polar residues) spans 416-433 (AQKQSSYHGVHQAWNTNQ). S435 is subject to Phosphoserine.

Belongs to the AB hydrolase superfamily. Lipase family. Tyrosine sulfation occurs in the female only and plays an essential functional role. In terms of tissue distribution, expressed in females only.

The protein localises to the secreted. The protein resides in the vesicle. In terms of biological role, vitellogenin is the major yolk protein of eggs where it is used as a food source during embryogenesis. Along with Yp2 and Yp3, and their receptor yl/yolkless, required for maintenance of microtubule plus-end orientation towards the posterior pole of oocytes. Involved in polarized localization of germ plasm components, such as osk mRNA and vas protein, to the oocyte posterior cortex. Receptor-mediated endocytosis by yl/yolkless is crucial for actin reorganization, mediated by osk isoform A/Long, required to anchor germ plasm components to the oocyte cortex. The chain is Vitellogenin-1 (Yp1) from Drosophila melanogaster (Fruit fly).